The following is a 476-amino-acid chain: tRNA-2-methylthio-N(6)-dimethylallyladenosine synthase (476 aa).

Basic and acidic residues predominate over residues 1–14; it reads MTEVVHLHMPEEAR. The interval 1–20 is disordered; that stretch reads MTEVVHLHMPEEARATQSRD. The MTTase N-terminal domain occupies 26-147; it reads RRYYVWTVGC…APNPIYQLEE (122 aa). C35, C71, C105, C170, C174, and C177 together coordinate [4Fe-4S] cluster. The Radical SAM core domain maps to 156–390; sequence DHPPVSVHVP…ERLQEQIAAE (235 aa). The 61-residue stretch at 393-453 folds into the TRAM domain; sequence ARFLHQTVEV…PWSLQGVLAR (61 aa).

This sequence belongs to the methylthiotransferase family. MiaB subfamily. Monomer. [4Fe-4S] cluster is required as a cofactor.

It localises to the cytoplasm. The enzyme catalyses N(6)-dimethylallyladenosine(37) in tRNA + (sulfur carrier)-SH + AH2 + 2 S-adenosyl-L-methionine = 2-methylsulfanyl-N(6)-dimethylallyladenosine(37) in tRNA + (sulfur carrier)-H + 5'-deoxyadenosine + L-methionine + A + S-adenosyl-L-homocysteine + 2 H(+). Functionally, catalyzes the methylthiolation of N6-(dimethylallyl)adenosine (i(6)A), leading to the formation of 2-methylthio-N6-(dimethylallyl)adenosine (ms(2)i(6)A) at position 37 in tRNAs that read codons beginning with uridine. This chain is tRNA-2-methylthio-N(6)-dimethylallyladenosine synthase, found in Roseiflexus sp. (strain RS-1).